Consider the following 467-residue polypeptide: Acetyl-CoA decarbonylase/synthase complex subunit beta (467 aa).

[Ni-Fe-S] cluster-binding residues include C193, C196, C282, and C284. Residues R403–E428 are disordered. A compositionally biased stretch (acidic residues) spans A405–T426.

The protein belongs to the CdhC family. In terms of assembly, monomer. The ACDS complex is made up of alpha, epsilon, beta, gamma and delta chains with a probable stoichiometry of (alpha(2)epsilon(2))(4)-beta(8)-(gamma(1)delta(1))(8). The cofactor is [Ni-Fe-S] cluster.

It carries out the reaction Co(I)-[corrinoid Fe-S protein] + acetyl-CoA + H(+) = methyl-Co(III)-[corrinoid Fe-S protein] + CO + CoA. Functionally, part of a complex that catalyzes the reversible cleavage of acetyl-CoA, allowing autotrophic growth from CO(2). The alpha-epsilon complex generates CO from CO(2), while the beta subunit (this protein) combines the CO with CoA and a methyl group to form acetyl-CoA. The methyl group, which is incorporated into acetyl-CoA, is transferred to the beta subunit by a corrinoid iron-sulfur protein (the gamma-delta complex). The sequence is that of Acetyl-CoA decarbonylase/synthase complex subunit beta from Methanopyrus kandleri (strain AV19 / DSM 6324 / JCM 9639 / NBRC 100938).